The sequence spans 356 residues: Cyanuric acid amidohydrolase (356 aa).

Residues 1-99 are RU A; that stretch reads MPIAKVHRIA…FLVFERAEGN (99 aa). Substrate is bound by residues Arg52 and 79-80; that span reads SG. An RU B region spans residues 106 to 243; sequence ALAIGRAHTP…HEIVVLGMSE (138 aa). Lys156 is a catalytic residue. Residues Arg188 and 226 to 227 each bind substrate; that span reads SS. Residue Ser226 is the Nucleophile of the active site. The RU C stretch occupies residues 249–356; it reads LAIAHGVMAD…VAVIAARTMG (108 aa). Glu287 provides a ligand contact to Mg(2+). Substrate-binding positions include Arg314 and 333–334; that span reads SG. Residues Gly336, Gln339, Gly340, Pro341, and Gly344 each contribute to the Mg(2+) site.

This sequence belongs to the cyclic amide hydrolase (CyAH) family. As to quaternary structure, homotetramer.

The catalysed reaction is cyanurate + H2O = 1-carboxybiuret + H(+). Its pathway is xenobiotic degradation; atrazine degradation; biuret from cyanurate: step 1/1. With respect to regulation, inhibited by barbituric acid. Responsible for the hydrolysis of cyanuric acid, an intermediate formed during catabolism of s-triazine based compounds in herbicides such as atrazine and polymers such as melamine. Catalyzes the hydrolytic opening of the s-triazine ring of cyanuric acid (2,4,6-trihydroxy-s-triazine) to yield carbon dioxide and carboxybiuret, which spontaneously decarboxylates to biuret. This is Cyanuric acid amidohydrolase from Azorhizobium caulinodans (strain ATCC 43989 / DSM 5975 / JCM 20966 / LMG 6465 / NBRC 14845 / NCIMB 13405 / ORS 571).